Reading from the N-terminus, the 629-residue chain is tRNA uridine 5-carboxymethylaminomethyl modification enzyme MnmG (629 aa).

FAD is bound by residues Gly13–Gly18, Val125, and Ser180. Gly273–Phe287 provides a ligand contact to NAD(+). Position 370 (Gln370) interacts with FAD.

The protein belongs to the MnmG family. Homodimer. Heterotetramer of two MnmE and two MnmG subunits. The cofactor is FAD.

The protein localises to the cytoplasm. Functionally, NAD-binding protein involved in the addition of a carboxymethylaminomethyl (cmnm) group at the wobble position (U34) of certain tRNAs, forming tRNA-cmnm(5)s(2)U34. This is tRNA uridine 5-carboxymethylaminomethyl modification enzyme MnmG from Escherichia coli O139:H28 (strain E24377A / ETEC).